A 294-amino-acid polypeptide reads, in one-letter code: P32 adhesin (294 aa).

The next 2 membrane-spanning stretches (helical) occupy residues 11 to 31 and 66 to 86; these read LVGV…VGLT and VVGA…GIGI. 2 tandem repeats follow at residues 172-193 and 194-214. Positions 172 to 214 are 2 X 22 AA repeats; that stretch reads GGPMQPNQMGMRPGFNQMPPQMGGMPPNQMGMRPGFNQMPPQM. The segment at 234 to 294 is disordered; that stretch reads RPGFRPQPGG…AGFPPQNGPR (61 aa). Positions 241 to 256 are enriched in gly residues; the sequence is PGGGVPMGNKAGGGFN.

It localises to the cell projection. Its subcellular location is the attachment organelle membrane. Functionally, adhesin necessary for successful cytadherence and virulence. The protein is P32 adhesin (mgc2) of Mycoplasmoides gallisepticum (strain R(low / passage 15 / clone 2)) (Mycoplasma gallisepticum).